Consider the following 291-residue polypeptide: Methylsterol monooxygenase 1-3 (291 aa).

The next 3 membrane-spanning stretches (helical) occupy residues Thr-41–Trp-61, Phe-92–Ile-112, and Ser-114–Ile-134. In terms of domain architecture, Fatty acid hydroxylase spans Leu-128–Thr-263. Positions His-143–His-147 match the Histidine box-1 motif. Residues His-156–His-160 carry the Histidine box-2 motif. Residues Ile-178–Thr-198 traverse the membrane as a helical segment. The Histidine box-3 signature appears at Tyr-235–Tyr-241.

The protein belongs to the sterol desaturase family. As to quaternary structure, interacts with ACBP1. Fe cation serves as cofactor. As to expression, expressed at low levels in leaves, roots, siliques and flowers.

Its subcellular location is the endoplasmic reticulum membrane. The catalysed reaction is 4,4-dimethyl-5alpha-cholest-7-en-3beta-ol + 6 Fe(II)-[cytochrome b5] + 3 O2 + 5 H(+) = 4alpha-carboxy-4beta-methyl-5alpha-cholest-7-ene-3beta-ol + 6 Fe(III)-[cytochrome b5] + 4 H2O. It catalyses the reaction 24-methylidenelophenol + 6 Fe(II)-[cytochrome b5] + 3 O2 + 5 H(+) = 4alpha-carboxy-ergosta-7,24(24(1))-dien-3beta-ol + 6 Fe(III)-[cytochrome b5] + 4 H2O. Functionally, non-heme iron oxygenase involved in sterols biosynthesis by catalyzing the removal of the first methyl group at the C-4 position. 4,4-dimethyl-9-beta,19-cyclopropylsterols such as 24-methylenecycloartanol are the preferred substrates. The sequence is that of Methylsterol monooxygenase 1-3 from Arabidopsis thaliana (Mouse-ear cress).